The following is a 286-amino-acid chain: CDP-diacylglycerol--serine O-phosphatidyltransferase (286 aa).

Helical transmembrane passes span Ile-15 to Ala-35, Met-95 to Leu-115, Glu-135 to Leu-155, Val-167 to Met-187, and Leu-207 to Ile-227.

This sequence belongs to the CDP-alcohol phosphatidyltransferase class-I family.

The protein resides in the cell membrane. The enzyme catalyses a CDP-1,2-diacyl-sn-glycerol + L-serine = a 1,2-diacyl-sn-glycero-3-phospho-L-serine + CMP + H(+). This is CDP-diacylglycerol--serine O-phosphatidyltransferase (pssA) from Mycobacterium bovis (strain ATCC BAA-935 / AF2122/97).